The sequence spans 140 residues: 3-hydroxyacyl-[acyl-carrier-protein] dehydratase FabZ (140 aa).

Residue histidine 47 is part of the active site.

This sequence belongs to the thioester dehydratase family. FabZ subfamily.

It localises to the cytoplasm. The catalysed reaction is a (3R)-hydroxyacyl-[ACP] = a (2E)-enoyl-[ACP] + H2O. In terms of biological role, involved in unsaturated fatty acids biosynthesis. Catalyzes the dehydration of short chain beta-hydroxyacyl-ACPs and long chain saturated and unsaturated beta-hydroxyacyl-ACPs. The polypeptide is 3-hydroxyacyl-[acyl-carrier-protein] dehydratase FabZ (Streptococcus pneumoniae (strain CGSP14)).